The primary structure comprises 404 residues: Phosphopentomutase (404 aa).

The Mn(2+) site is built by D10, D303, H308, D344, H345, and H356.

Belongs to the phosphopentomutase family. It depends on Mn(2+) as a cofactor.

It localises to the cytoplasm. It catalyses the reaction 2-deoxy-alpha-D-ribose 1-phosphate = 2-deoxy-D-ribose 5-phosphate. The catalysed reaction is alpha-D-ribose 1-phosphate = D-ribose 5-phosphate. It participates in carbohydrate degradation; 2-deoxy-D-ribose 1-phosphate degradation; D-glyceraldehyde 3-phosphate and acetaldehyde from 2-deoxy-alpha-D-ribose 1-phosphate: step 1/2. Functionally, isomerase that catalyzes the conversion of deoxy-ribose 1-phosphate (dRib-1-P) and ribose 1-phosphate (Rib-1-P) to deoxy-ribose 5-phosphate (dRib-5-P) and ribose 5-phosphate (Rib-5-P), respectively. This is Phosphopentomutase from Shewanella oneidensis (strain ATCC 700550 / JCM 31522 / CIP 106686 / LMG 19005 / NCIMB 14063 / MR-1).